Consider the following 150-residue polypeptide: MFKQVLGGMALMAAFSAPVLAAECSVDIAGTDQMQFDKKAIEVSKSCKQFTVNLKHTGKLPRNVMGHNWVLTKTADMQAVEKDGIAAGLDNQYLKAGDTRVLAHTKVLGGGESDSVTFDVAKLAAGDDYTFFCSFPGHGALMKGTLKLVD.

The first 21 residues, 1–21, serve as a signal peptide directing secretion; it reads MFKQVLGGMALMAAFSAPVLA. Positions 22 to 150 constitute a Plastocyanin-like domain; sequence AECSVDIAGT…LMKGTLKLVD (129 aa). Cys-24 and Cys-47 are oxidised to a cystine. Cu cation is bound by residues His-67, Cys-133, His-138, and Met-142.

It is found in the periplasm. The polypeptide is Azurin (Bordetella bronchiseptica (strain ATCC BAA-588 / NCTC 13252 / RB50) (Alcaligenes bronchisepticus)).